A 309-amino-acid polypeptide reads, in one-letter code: Ribonuclease Z (309 aa).

7 residues coordinate Zn(2+): His63, His65, Asp67, His68, His145, Asp216, and His274. The Proton acceptor role is filled by Asp67.

Belongs to the RNase Z family. In terms of assembly, homodimer. Zn(2+) serves as cofactor.

The enzyme catalyses Endonucleolytic cleavage of RNA, removing extra 3' nucleotides from tRNA precursor, generating 3' termini of tRNAs. A 3'-hydroxy group is left at the tRNA terminus and a 5'-phosphoryl group is left at the trailer molecule.. Zinc phosphodiesterase, which displays some tRNA 3'-processing endonuclease activity. Probably involved in tRNA maturation, by removing a 3'-trailer from precursor tRNA. The chain is Ribonuclease Z from Streptococcus pneumoniae (strain 70585).